The sequence spans 141 residues: Galactose-6-phosphate isomerase subunit LacA 1 (141 aa).

This sequence belongs to the LacAB/RpiB family. Heteromultimeric protein consisting of LacA and LacB.

The enzyme catalyses aldehydo-D-galactose 6-phosphate = keto-D-tagatose 6-phosphate. It functions in the pathway carbohydrate metabolism; D-galactose 6-phosphate degradation; D-tagatose 6-phosphate from D-galactose 6-phosphate: step 1/1. This is Galactose-6-phosphate isomerase subunit LacA 1 from Streptococcus pyogenes serotype M6 (strain ATCC BAA-946 / MGAS10394).